A 367-amino-acid polypeptide reads, in one-letter code: Chorismate synthase (367 aa).

NADP(+) is bound at residue Arg48. Residues 125 to 127 (RSS), 238 to 239 (NA), Gly278, 293 to 297 (KPTSS), and Arg319 each bind FMN.

Belongs to the chorismate synthase family. Homotetramer. FMNH2 is required as a cofactor.

It catalyses the reaction 5-O-(1-carboxyvinyl)-3-phosphoshikimate = chorismate + phosphate. It participates in metabolic intermediate biosynthesis; chorismate biosynthesis; chorismate from D-erythrose 4-phosphate and phosphoenolpyruvate: step 7/7. In terms of biological role, catalyzes the anti-1,4-elimination of the C-3 phosphate and the C-6 proR hydrogen from 5-enolpyruvylshikimate-3-phosphate (EPSP) to yield chorismate, which is the branch point compound that serves as the starting substrate for the three terminal pathways of aromatic amino acid biosynthesis. This reaction introduces a second double bond into the aromatic ring system. This is Chorismate synthase from Halorhodospira halophila (strain DSM 244 / SL1) (Ectothiorhodospira halophila (strain DSM 244 / SL1)).